Consider the following 885-residue polypeptide: Glycerol-3-phosphate acyltransferase (885 aa).

The span at Met-1–Pro-17 shows a compositional bias: pro residues. Residues Met-1–Ala-26 form a disordered region. Positions His-362–Asp-367 match the HXXXXD motif motif.

The protein belongs to the GPAT/DAPAT family.

The protein localises to the cell inner membrane. It catalyses the reaction sn-glycerol 3-phosphate + an acyl-CoA = a 1-acyl-sn-glycero-3-phosphate + CoA. It participates in phospholipid metabolism; CDP-diacylglycerol biosynthesis; CDP-diacylglycerol from sn-glycerol 3-phosphate: step 1/3. This Xanthomonas axonopodis pv. citri (strain 306) protein is Glycerol-3-phosphate acyltransferase.